Consider the following 416-residue polypeptide: Imidazolonepropionase (416 aa).

Positions 78 and 80 each coordinate Fe(3+). The Zn(2+) site is built by His78 and His80. Residues Arg87, Tyr150, and His183 each coordinate 4-imidazolone-5-propanoate. An N-formimidoyl-L-glutamate-binding site is contributed by Tyr150. His248 contacts Fe(3+). Zn(2+) is bound at residue His248. Gln251 provides a ligand contact to 4-imidazolone-5-propanoate. Asp323 is a binding site for Fe(3+). Residue Asp323 coordinates Zn(2+). Residues Asn325 and Gly327 each coordinate N-formimidoyl-L-glutamate. Thr328 is a 4-imidazolone-5-propanoate binding site.

This sequence belongs to the metallo-dependent hydrolases superfamily. HutI family. Requires Zn(2+) as cofactor. The cofactor is Fe(3+).

The protein localises to the cytoplasm. It catalyses the reaction 4-imidazolone-5-propanoate + H2O = N-formimidoyl-L-glutamate. The protein operates within amino-acid degradation; L-histidine degradation into L-glutamate; N-formimidoyl-L-glutamate from L-histidine: step 3/3. Functionally, catalyzes the hydrolytic cleavage of the carbon-nitrogen bond in imidazolone-5-propanoate to yield N-formimidoyl-L-glutamate. It is the third step in the universal histidine degradation pathway. The protein is Imidazolonepropionase of Vibrio parahaemolyticus serotype O3:K6 (strain RIMD 2210633).